The following is a 151-amino-acid chain: MHALQAKILDPRIGNEFPLPQYATPGSAGLDLRAMLKEDTLLEPGQTLLIPTGLSVYIGDPGLAALILPRSGLGHKHGIVLGNLVGLIDSDYQGELMVSCWNRGQTAFNIAVGERIAQLVLVPVVQAHFEVVEAFDESQRGAGGFGHSGSH.

Substrate-binding positions include 70-72 (RSG), Asn-83, 87-89 (LID), and Met-97.

This sequence belongs to the dUTPase family. Requires Mg(2+) as cofactor.

The enzyme catalyses dUTP + H2O = dUMP + diphosphate + H(+). It participates in pyrimidine metabolism; dUMP biosynthesis; dUMP from dCTP (dUTP route): step 2/2. In terms of biological role, this enzyme is involved in nucleotide metabolism: it produces dUMP, the immediate precursor of thymidine nucleotides and it decreases the intracellular concentration of dUTP so that uracil cannot be incorporated into DNA. The polypeptide is Deoxyuridine 5'-triphosphate nucleotidohydrolase (Pseudomonas fluorescens (strain ATCC BAA-477 / NRRL B-23932 / Pf-5)).